A 375-amino-acid polypeptide reads, in one-letter code: Deoxyhypusine synthase-like protein (375 aa).

Belongs to the deoxyhypusine synthase family.

This is Deoxyhypusine synthase-like protein from Elusimicrobium minutum (strain Pei191).